A 338-amino-acid chain; its full sequence is Ribosomal RNA small subunit methyltransferase H (338 aa).

Residues 46–48 (GGY), aspartate 63, phenylalanine 90, aspartate 106, and glutamine 113 contribute to the S-adenosyl-L-methionine site.

The protein belongs to the methyltransferase superfamily. RsmH family.

It localises to the cytoplasm. The catalysed reaction is cytidine(1402) in 16S rRNA + S-adenosyl-L-methionine = N(4)-methylcytidine(1402) in 16S rRNA + S-adenosyl-L-homocysteine + H(+). In terms of biological role, specifically methylates the N4 position of cytidine in position 1402 (C1402) of 16S rRNA. This chain is Ribosomal RNA small subunit methyltransferase H, found in Mesorhizobium japonicum (strain LMG 29417 / CECT 9101 / MAFF 303099) (Mesorhizobium loti (strain MAFF 303099)).